Here is a 144-residue protein sequence, read N- to C-terminus: Globin-1 (144 aa).

The region spanning 1-141 (VSANDIKNVQ…ILHQMSSYFA (141 aa)) is the Globin domain. Position 89 (H89) interacts with heme b.

This sequence belongs to the globin family. As to quaternary structure, homodimer.

The polypeptide is Globin-1 (Phreagena soyoae (Deep-sea cold-seep clam)).